The following is a 201-amino-acid chain: Probable chemoreceptor glutamine deamidase CheD 1 (201 aa).

Belongs to the CheD family.

It catalyses the reaction L-glutaminyl-[protein] + H2O = L-glutamyl-[protein] + NH4(+). In terms of biological role, probably deamidates glutamine residues to glutamate on methyl-accepting chemotaxis receptors (MCPs), playing an important role in chemotaxis. The protein is Probable chemoreceptor glutamine deamidase CheD 1 of Geobacter sulfurreducens (strain ATCC 51573 / DSM 12127 / PCA).